A 28-amino-acid polypeptide reads, in one-letter code: Somatostatin-2 (28 aa).

Cysteine 17 and cysteine 28 form a disulfide bridge.

It belongs to the somatostatin family.

It is found in the secreted. Functionally, somatostatin inhibits the release of somatotropin. This is Somatostatin-2 (sst2) from Oreochromis niloticus (Nile tilapia).